Consider the following 253-residue polypeptide: UPF0280 protein MA_1715 (253 aa).

Belongs to the UPF0280 family.

This Methanosarcina acetivorans (strain ATCC 35395 / DSM 2834 / JCM 12185 / C2A) protein is UPF0280 protein MA_1715.